The primary structure comprises 383 residues: tRNA(Met) cytidine acetate ligase (383 aa).

ATP-binding positions include 7–20, Gly102, Asn160, and 181–182; these read ISEY…HLYQ and RI.

This sequence belongs to the TmcAL family.

It localises to the cytoplasm. It catalyses the reaction cytidine(34) in elongator tRNA(Met) + acetate + ATP = N(4)-acetylcytidine(34) in elongator tRNA(Met) + AMP + diphosphate. Functionally, catalyzes the formation of N(4)-acetylcytidine (ac(4)C) at the wobble position of elongator tRNA(Met), using acetate and ATP as substrates. First activates an acetate ion to form acetyladenylate (Ac-AMP) and then transfers the acetyl group to tRNA to form ac(4)C34. The chain is tRNA(Met) cytidine acetate ligase from Exiguobacterium sibiricum (strain DSM 17290 / CCUG 55495 / CIP 109462 / JCM 13490 / 255-15).